The primary structure comprises 646 residues: Microtubule-associated protein 9 (646 aa).

Serine 2 is modified (N-acetylserine). The residue at position 12 (tyrosine 12) is a Phosphotyrosine. Disordered regions lie at residues 75 to 226, 242 to 418, 491 to 511, 531 to 554, 570 to 597, and 609 to 646; these read DFHI…QTEE, SLTS…LEPD, RLEE…KGEA, RREK…KKKD, LKQK…KDKQ, and KERQ…SKVF. Polar residues-rich tracts occupy residues 105 to 119 and 157 to 167; these read ALDS…SSPD and RSTSSGETSSG. Positions 188-204 are enriched in basic and acidic residues; sequence SHTEEGVRPGVDKEHSI. Polar residues-rich tracts occupy residues 205-222, 280-291, and 330-340; these read SEAS…GTEL, LLSNENEGSSVL, and PLLSTSPSVIT. Residues 346-357 are compositionally biased toward basic and acidic residues; the sequence is EPAKKANEDRNT. Positions 386-398 are enriched in polar residues; the sequence is TKRSPSAATSSHY. A compositionally biased stretch (basic and acidic residues) spans 405–418; that stretch reads LDQKQPRKQSLEPD. The stretch at 442–596 forms a coiled coil; the sequence is MHRIKRIESE…KRAEKKDKDK (155 aa). The segment covering 637 to 646 has biased composition (polar residues); the sequence is PSRTAPSKVF.

In terms of assembly, binds to purified microtubules via its C-terminus.

The protein resides in the cytoplasm. It is found in the cytoskeleton. It localises to the spindle. Its function is as follows. Involved in organization of the bipolar mitotic spindle. Required for bipolar spindle assembly, mitosis progression and cytokinesis. May act by stabilizing interphase microtubules. The sequence is that of Microtubule-associated protein 9 (Map9) from Mus musculus (Mouse).